Reading from the N-terminus, the 340-residue chain is Ketol-acid reductoisomerase (NADP(+)) (340 aa).

A KARI N-terminal Rossmann domain is found at 3–183 (VSIYYDKDCD…GGGRTGIIET (181 aa)). Residues 26 to 29 (FGSQ), K49, S54, and 84 to 87 (DEIQ) contribute to the NADP(+) site. Residue H109 is part of the active site. NADP(+) is bound at residue G135. Residues 184 to 329 (TFKAETETDL…RELRAMMPWI (146 aa)) form the KARI C-terminal knotted domain. 4 residues coordinate Mg(2+): D192, E196, E228, and E232. A substrate-binding site is contributed by S253.

Belongs to the ketol-acid reductoisomerase family. Requires Mg(2+) as cofactor.

The enzyme catalyses (2R)-2,3-dihydroxy-3-methylbutanoate + NADP(+) = (2S)-2-acetolactate + NADPH + H(+). The catalysed reaction is (2R,3R)-2,3-dihydroxy-3-methylpentanoate + NADP(+) = (S)-2-ethyl-2-hydroxy-3-oxobutanoate + NADPH + H(+). It participates in amino-acid biosynthesis; L-isoleucine biosynthesis; L-isoleucine from 2-oxobutanoate: step 2/4. The protein operates within amino-acid biosynthesis; L-valine biosynthesis; L-valine from pyruvate: step 2/4. Its function is as follows. Involved in the biosynthesis of branched-chain amino acids (BCAA). Catalyzes an alkyl-migration followed by a ketol-acid reduction of (S)-2-acetolactate (S2AL) to yield (R)-2,3-dihydroxy-isovalerate. In the isomerase reaction, S2AL is rearranged via a Mg-dependent methyl migration to produce 3-hydroxy-3-methyl-2-ketobutyrate (HMKB). In the reductase reaction, this 2-ketoacid undergoes a metal-dependent reduction by NADPH to yield (R)-2,3-dihydroxy-isovalerate. This Campylobacter lari (strain RM2100 / D67 / ATCC BAA-1060) protein is Ketol-acid reductoisomerase (NADP(+)).